Reading from the N-terminus, the 1128-residue chain is Transient receptor potential-gamma protein (1128 aa).

Residues 1-325 (MMEEENTIRP…MALQAVDIIR (325 aa)) lie on the Cytoplasmic side of the membrane. ANK repeat units lie at residues 57-86 (LGRT…DTKD) and 131-160 (PDIT…VLPM). A helical transmembrane segment spans residues 326-346 (IGIMFPIFSLAYILAPYSSIG). At 347-403 (QTMRKPFIKFICHSASYFTFLFLLMLASQRIETFIGGWFFADSSGMLNTMEELPTKR) the chain is on the extracellular side. The helical transmembrane segment at 404–424 (GAKPTFIEWLILAWVSGLIWS) threads the bilayer. The Cytoplasmic segment spans residues 425 to 444 (EVKQLWDVGLQEYLNDMWNV). The helical transmembrane segment at 445 to 465 (IDFVTNSLYVATVALRVVSFF) threads the bilayer. At 466-492 (QVQKEMIYNSHATDLPRERWDAWDPML) the chain is on the extracellular side. A helical membrane pass occupies residues 493–513 (ISEGLFSAANIFSSLKLVYIF). The Cytoplasmic portion of the chain corresponds to 514–535 (SVNPHLGPLQVSLSRMVMDIMK). Residues 536-556 (FFFLYVLVLFAFGSGLNQLLW) traverse the membrane as a helical segment. At 557-629 (YYADLEKKRC…GIKIFTRFWG (73 aa)) the chain is on the extracellular side. A helical transmembrane segment spans residues 630-650 (MLMFGTYSVINIVVLLNLLIA). The Cytoplasmic portion of the chain corresponds to 651–1128 (MMNHSYQLIS…SCVSTTGAIG (478 aa)). 2 disordered regions span residues 865-898 (RQQS…TASS) and 1064-1111 (AAEA…SVNS). Residues 878 to 893 (ESPTTPTAPQGTQGAA) show a composition bias toward low complexity. Polar residues predominate over residues 1085-1111 (TQSQHDSVETNSTFTLSIDPSNTSVNS).

The protein belongs to the transient receptor (TC 1.A.4) family. STrpC subfamily. As to quaternary structure, interacts preferentially with trpl and interacts to a lower extent with trp. Expressed predominantly in the rhabdomeres of photoreceptor cells.

The protein resides in the cell projection. It is found in the rhabdomere membrane. Functionally, a light-sensitive calcium channel that is required for inositide-mediated Ca(2+) entry in the retina during phospholipase C (PLC)-mediated phototransduction. Forms a regulated cation channel when heteromultimerized with trpl. In Drosophila melanogaster (Fruit fly), this protein is Transient receptor potential-gamma protein (Trpgamma).